An 876-amino-acid polypeptide reads, in one-letter code: Valine--tRNA ligase (876 aa).

The 'HIGH' region signature appears at 44–54 (PNVTGKLHLGH). The short motif at 520–524 (KMSKS) is the 'KMSKS' region element. Lysine 523 contacts ATP. The stretch at 805–876 (LEGLIDMDKE…VKARIEQLKA (72 aa)) forms a coiled coil.

This sequence belongs to the class-I aminoacyl-tRNA synthetase family. ValS type 1 subfamily. As to quaternary structure, monomer.

The protein resides in the cytoplasm. It catalyses the reaction tRNA(Val) + L-valine + ATP = L-valyl-tRNA(Val) + AMP + diphosphate. Catalyzes the attachment of valine to tRNA(Val). As ValRS can inadvertently accommodate and process structurally similar amino acids such as threonine, to avoid such errors, it has a 'posttransfer' editing activity that hydrolyzes mischarged Thr-tRNA(Val) in a tRNA-dependent manner. The polypeptide is Valine--tRNA ligase (Staphylococcus aureus (strain JH1)).